Here is a 235-residue protein sequence, read N- to C-terminus: Orotidine 5'-phosphate decarboxylase (235 aa).

Residues aspartate 17, lysine 39, 66-75 (DLKLHDIGNT), threonine 121, arginine 182, glutamine 191, glycine 211, and arginine 212 each bind substrate. The Proton donor role is filled by lysine 68.

It belongs to the OMP decarboxylase family. Type 1 subfamily. Homodimer.

The catalysed reaction is orotidine 5'-phosphate + H(+) = UMP + CO2. It functions in the pathway pyrimidine metabolism; UMP biosynthesis via de novo pathway; UMP from orotate: step 2/2. Its function is as follows. Catalyzes the decarboxylation of orotidine 5'-monophosphate (OMP) to uridine 5'-monophosphate (UMP). This chain is Orotidine 5'-phosphate decarboxylase, found in Rhodopseudomonas palustris (strain BisB5).